Here is a 415-residue protein sequence, read N- to C-terminus: F-box/kelch-repeat protein At2g29600 (415 aa).

The disordered stretch occupies residues 1–58; it reads MASISETSDDGSNGGDPNQKPEEPHKNPQEGKEEENQNEKPKEDDHQEEEVENVPQIP. Residues 19-45 show a composition bias toward basic and acidic residues; sequence QKPEEPHKNPQEGKEEENQNEKPKEDD. In terms of domain architecture, F-box spans 56-103; sequence QIPPQMPLELIVSTIATLRRCHYPTLSLLSDSFRQVISSVDLFQTRSL. Kelch repeat units lie at residues 161–208, 210–254, 260–309, and 311–355; these read KIYV…VIDG, IYVV…FNVH, KIYI…AVVP, and HLHV…KLMI.

This chain is F-box/kelch-repeat protein At2g29600, found in Arabidopsis thaliana (Mouse-ear cress).